Consider the following 521-residue polypeptide: Zinc finger CCCH domain-containing protein 45 (521 aa).

Disordered stretches follow at residues 28 to 60 (TEDS…GFEG), 142 to 185 (TPAI…PLCS), and 296 to 319 (SRSF…ISPP). The segment covering 34–43 (NVASQPQRHS) has biased composition (polar residues). The span at 159–168 (EESSNSKVES) shows a compositional bias: low complexity. Residues 170-185 (VTANKQGQLETKPLCS) are compositionally biased toward polar residues. The segment at 469-497 (NKIHQQCIYFGTANGCNMGDSCTYVHDRY) adopts a C3H1-type zinc-finger fold.

The sequence is that of Zinc finger CCCH domain-containing protein 45 from Arabidopsis thaliana (Mouse-ear cress).